A 374-amino-acid chain; its full sequence is UPF0496 protein At4g34320 (374 aa).

2 consecutive transmembrane segments (helical) span residues 215–235 (IIFV…AAMA) and 238–258 (PVAA…GKWI).

It belongs to the UPF0496 family.

The protein resides in the membrane. The protein is UPF0496 protein At4g34320 of Arabidopsis thaliana (Mouse-ear cress).